The sequence spans 282 residues: 2-dehydro-3-deoxyphosphooctonate aldolase (282 aa).

This sequence belongs to the KdsA family.

Its subcellular location is the cytoplasm. The catalysed reaction is D-arabinose 5-phosphate + phosphoenolpyruvate + H2O = 3-deoxy-alpha-D-manno-2-octulosonate-8-phosphate + phosphate. Its pathway is carbohydrate biosynthesis; 3-deoxy-D-manno-octulosonate biosynthesis; 3-deoxy-D-manno-octulosonate from D-ribulose 5-phosphate: step 2/3. It participates in bacterial outer membrane biogenesis; lipopolysaccharide biosynthesis. The chain is 2-dehydro-3-deoxyphosphooctonate aldolase from Shewanella oneidensis (strain ATCC 700550 / JCM 31522 / CIP 106686 / LMG 19005 / NCIMB 14063 / MR-1).